The following is a 517-amino-acid chain: 2-isopropylmalate synthase (517 aa).

Residues 4 to 266 (INFFDTTLRD…ESTIQLNEIK (263 aa)) form the Pyruvate carboxyltransferase domain. The Mn(2+) site is built by Asp-13, His-201, His-203, and Asn-237. The regulatory domain stretch occupies residues 391–517 (EFESLQVHYG…IEIEKHHAIS (127 aa)).

This sequence belongs to the alpha-IPM synthase/homocitrate synthase family. LeuA type 1 subfamily. As to quaternary structure, homodimer. The cofactor is Mn(2+).

The protein resides in the cytoplasm. It carries out the reaction 3-methyl-2-oxobutanoate + acetyl-CoA + H2O = (2S)-2-isopropylmalate + CoA + H(+). It participates in amino-acid biosynthesis; L-leucine biosynthesis; L-leucine from 3-methyl-2-oxobutanoate: step 1/4. Its function is as follows. Catalyzes the condensation of the acetyl group of acetyl-CoA with 3-methyl-2-oxobutanoate (2-ketoisovalerate) to form 3-carboxy-3-hydroxy-4-methylpentanoate (2-isopropylmalate). The chain is 2-isopropylmalate synthase from Bacillus pumilus (strain SAFR-032).